A 174-amino-acid chain; its full sequence is MTLILGIDPGSRITGYGVVRDTGRGCVYVASGCIRTGSGELHERLQIVYRGVREVIKTYGPVTMGIEKVFMARNADSALKLGQARGAAIVAGAEEALEIAEYTATQVKQAVAGTGGANKEQVMMMVMHLLKLTQKPQIDASDALAIALCHAHTRSSLIPHGLSTARSRGGRLRL.

Active-site residues include D8, E67, and D139. The Mg(2+) site is built by D8, E67, and D139.

This sequence belongs to the RuvC family. Homodimer which binds Holliday junction (HJ) DNA. The HJ becomes 2-fold symmetrical on binding to RuvC with unstacked arms; it has a different conformation from HJ DNA in complex with RuvA. In the full resolvosome a probable DNA-RuvA(4)-RuvB(12)-RuvC(2) complex forms which resolves the HJ. Mg(2+) serves as cofactor.

It localises to the cytoplasm. The enzyme catalyses Endonucleolytic cleavage at a junction such as a reciprocal single-stranded crossover between two homologous DNA duplexes (Holliday junction).. In terms of biological role, the RuvA-RuvB-RuvC complex processes Holliday junction (HJ) DNA during genetic recombination and DNA repair. Endonuclease that resolves HJ intermediates. Cleaves cruciform DNA by making single-stranded nicks across the HJ at symmetrical positions within the homologous arms, yielding a 5'-phosphate and a 3'-hydroxyl group; requires a central core of homology in the junction. The consensus cleavage sequence is 5'-(A/T)TT(C/G)-3'. Cleavage occurs on the 3'-side of the TT dinucleotide at the point of strand exchange. HJ branch migration catalyzed by RuvA-RuvB allows RuvC to scan DNA until it finds its consensus sequence, where it cleaves and resolves the cruciform DNA. The polypeptide is Crossover junction endodeoxyribonuclease RuvC (Pseudomonas savastanoi pv. phaseolicola (strain 1448A / Race 6) (Pseudomonas syringae pv. phaseolicola (strain 1448A / Race 6))).